A 603-amino-acid polypeptide reads, in one-letter code: Aspartate--tRNA(Asp/Asn) ligase (603 aa).

An L-aspartate-binding site is contributed by Glu-172. Positions 196–199 (QLFK) are aspartate. Arg-218 serves as a coordination point for L-aspartate. Residues 218 to 220 (RDE) and Gln-227 each bind ATP. Residue His-457 coordinates L-aspartate. ATP is bound at residue Glu-491. Arg-498 contributes to the L-aspartate binding site. Position 543-546 (543-546 (GLDR)) interacts with ATP.

This sequence belongs to the class-II aminoacyl-tRNA synthetase family. Type 1 subfamily. As to quaternary structure, homodimer.

The protein localises to the cytoplasm. It carries out the reaction tRNA(Asx) + L-aspartate + ATP = L-aspartyl-tRNA(Asx) + AMP + diphosphate. Aspartyl-tRNA synthetase with relaxed tRNA specificity since it is able to aspartylate not only its cognate tRNA(Asp) but also tRNA(Asn). Reaction proceeds in two steps: L-aspartate is first activated by ATP to form Asp-AMP and then transferred to the acceptor end of tRNA(Asp/Asn). This chain is Aspartate--tRNA(Asp/Asn) ligase, found in Laribacter hongkongensis (strain HLHK9).